The chain runs to 250 residues: Small ribosomal subunit protein uS3z (250 aa).

A KH type-2 domain is found at 21-92 (LNEVLTRELA…SVELYAEKVN (72 aa)).

This sequence belongs to the universal ribosomal protein uS3 family. As to quaternary structure, interacts with SNRNP35.

The sequence is that of Small ribosomal subunit protein uS3z (RPS3A) from Arabidopsis thaliana (Mouse-ear cress).